A 53-amino-acid polypeptide reads, in one-letter code: SDVRNAAVHERQKELVPSKITTCCGYSPGTACPSCMCTNTCKKKNKKPGRRND.

Positions 1 to 11 (SDVRNAAVHER) are excised as a propeptide. Q12 is subject to Pyrrolidone carboxylic acid. A 4-carboxyglutamate modification is found at E14. S18 carries O-linked (HexNAc...) serine glycosylation. 4-hydroxyproline is present on residues P28, P33, and P48. P48 carries the proline amide modification. Residues 49–53 (GRRND) constitute a propeptide that is removed on maturation.

Belongs to the conotoxin A superfamily. Contains 3 disulfide bonds. In terms of tissue distribution, expressed by the venom duct.

The protein localises to the secreted. Its function is as follows. Probable neurotoxin with ion channel inhibitor activity. The chain is Conotoxin Ac4.3b from Conus achatinus (Little frog cone).